A 455-amino-acid polypeptide reads, in one-letter code: Bifunctional protein GlmU (455 aa).

The pyrophosphorylase stretch occupies residues 1-226 (MSLEIVILAA…AMEVQGANDR (226 aa)). UDP-N-acetyl-alpha-D-glucosamine-binding positions include 8-11 (LAAG), lysine 22, glutamine 73, 78-79 (GT), 99-101 (YGD), glycine 136, glutamate 151, asparagine 166, and asparagine 224. Aspartate 101 lines the Mg(2+) pocket. Residue asparagine 224 participates in Mg(2+) binding. Residues 227-247 (KQLAELERHYQLRAGRRLMAQ) form a linker region. The N-acetyltransferase stretch occupies residues 248-455 (GVTLRDPARF…WKRPEKIKKD (208 aa)). Residues arginine 330 and lysine 348 each contribute to the UDP-N-acetyl-alpha-D-glucosamine site. Catalysis depends on histidine 360, which acts as the Proton acceptor. UDP-N-acetyl-alpha-D-glucosamine is bound by residues tyrosine 363 and asparagine 374. Acetyl-CoA is bound by residues alanine 377, 383 to 384 (NY), serine 402, alanine 420, and arginine 437.

The protein in the N-terminal section; belongs to the N-acetylglucosamine-1-phosphate uridyltransferase family. This sequence in the C-terminal section; belongs to the transferase hexapeptide repeat family. Homotrimer. Mg(2+) is required as a cofactor.

The protein localises to the cytoplasm. The catalysed reaction is alpha-D-glucosamine 1-phosphate + acetyl-CoA = N-acetyl-alpha-D-glucosamine 1-phosphate + CoA + H(+). It catalyses the reaction N-acetyl-alpha-D-glucosamine 1-phosphate + UTP + H(+) = UDP-N-acetyl-alpha-D-glucosamine + diphosphate. It participates in nucleotide-sugar biosynthesis; UDP-N-acetyl-alpha-D-glucosamine biosynthesis; N-acetyl-alpha-D-glucosamine 1-phosphate from alpha-D-glucosamine 6-phosphate (route II): step 2/2. The protein operates within nucleotide-sugar biosynthesis; UDP-N-acetyl-alpha-D-glucosamine biosynthesis; UDP-N-acetyl-alpha-D-glucosamine from N-acetyl-alpha-D-glucosamine 1-phosphate: step 1/1. Its pathway is bacterial outer membrane biogenesis; LPS lipid A biosynthesis. Its function is as follows. Catalyzes the last two sequential reactions in the de novo biosynthetic pathway for UDP-N-acetylglucosamine (UDP-GlcNAc). The C-terminal domain catalyzes the transfer of acetyl group from acetyl coenzyme A to glucosamine-1-phosphate (GlcN-1-P) to produce N-acetylglucosamine-1-phosphate (GlcNAc-1-P), which is converted into UDP-GlcNAc by the transfer of uridine 5-monophosphate (from uridine 5-triphosphate), a reaction catalyzed by the N-terminal domain. This Pseudomonas fluorescens (strain ATCC BAA-477 / NRRL B-23932 / Pf-5) protein is Bifunctional protein GlmU.